Consider the following 525-residue polypeptide: Beta-1,4-xylosyltransferase IRX14 (525 aa).

Topologically, residues 1-35 are cytoplasmic; it reads MKLSALHQSYLNRRSNSFRSPTSLDSSVDGSGKSL. A helical; Signal-anchor for type II membrane protein transmembrane segment spans residues 36 to 56; the sequence is IAVFWLILHCLCCLISLVLGF. The Lumenal segment spans residues 57–525; sequence RFSRLVFFFL…SSSSKHQERN (469 aa). N-linked (GlcNAc...) asparagine glycans are attached at residues N102, N204, and N326. Residues 452–525 are disordered; the sequence is RTPWPDVPPE…SSSSKHQERN (74 aa). The segment covering 471–488 has biased composition (polar residues); sequence PLSQGNTVVVIPKQQQHP. Over residues 489-503 the composition is skewed to basic residues; it reads TKIRKPKRKSKKSKH. A compositionally biased stretch (polar residues) spans 508–519; that stretch reads TDTTTQVYSSSS.

This sequence belongs to the glycosyltransferase 43 family. As to expression, expressed in developing interfascicular fibers and xylem cells in stems and developing secondary xylem in roots.

It localises to the golgi apparatus membrane. It catalyses the reaction [(1-&gt;4)-beta-D-xylan](n) + UDP-alpha-D-xylose = [(1-&gt;4)-beta-D-xylan](n+1) + UDP + H(+). Involved in the synthesis of the hemicellulose glucuronoxylan, a major component of secondary cell walls. Involved in the elongation of glucuronoxylan xylosyl backbone. Xylan xylosyltransferase that acts cooperatively with IRX9 to achieve the successive addition of xylosyl residues during xylan backbone elongation. Required for the proper composition and structural properties of released seed coat mucilage. Required for the production of highly branched xylan polymers in seed coat mucilage. Xylan with xylose side chains seems to be necessary for pectin attachment to the seed surface. Together with MUCI70, required for xylan and pectin synthesis in seed coat epidermal (SCE) cells. The sequence is that of Beta-1,4-xylosyltransferase IRX14 from Arabidopsis thaliana (Mouse-ear cress).